Consider the following 212-residue polypeptide: Putative tyrosine-protein phosphatase OCA1 (212 aa).

Positions 1-27 (MSNKDTSILKGNVDHEEADSNPKLRKI) are disordered. The span at 12 to 22 (NVDHEEADSNP) shows a compositional bias: basic and acidic residues. The region spanning 40–208 (NFCPVERQLY…SVEIDPSKVP (169 aa)) is the Tyrosine-protein phosphatase domain. The active-site Phosphocysteine intermediate is the Cys-146.

It belongs to the protein-tyrosine phosphatase family.

The protein resides in the cytoplasm. It catalyses the reaction O-phospho-L-tyrosyl-[protein] + H2O = L-tyrosyl-[protein] + phosphate. Its function is as follows. Putative tyrosine-protein phosphatase required for protection against superoxide stress. The sequence is that of Putative tyrosine-protein phosphatase OCA1 (OCA1) from Scheffersomyces stipitis (strain ATCC 58785 / CBS 6054 / NBRC 10063 / NRRL Y-11545) (Yeast).